The chain runs to 64 residues: Large ribosomal subunit protein bL32 (64 aa).

Belongs to the bacterial ribosomal protein bL32 family.

This is Large ribosomal subunit protein bL32 from Flavobacterium johnsoniae (strain ATCC 17061 / DSM 2064 / JCM 8514 / BCRC 14874 / CCUG 350202 / NBRC 14942 / NCIMB 11054 / UW101) (Cytophaga johnsonae).